Here is a 123-residue protein sequence, read N- to C-terminus: Small ribosomal subunit protein uS12 (123 aa).

At aspartate 89 the chain carries 3-methylthioaspartic acid.

The protein belongs to the universal ribosomal protein uS12 family. In terms of assembly, part of the 30S ribosomal subunit. Contacts proteins S8 and S17. May interact with IF1 in the 30S initiation complex.

Its function is as follows. With S4 and S5 plays an important role in translational accuracy. Interacts with and stabilizes bases of the 16S rRNA that are involved in tRNA selection in the A site and with the mRNA backbone. Located at the interface of the 30S and 50S subunits, it traverses the body of the 30S subunit contacting proteins on the other side and probably holding the rRNA structure together. The combined cluster of proteins S8, S12 and S17 appears to hold together the shoulder and platform of the 30S subunit. This chain is Small ribosomal subunit protein uS12, found in Geobacter metallireducens (strain ATCC 53774 / DSM 7210 / GS-15).